Here is an 866-residue protein sequence, read N- to C-terminus: Putative linoleate 9S-lipoxygenase 3 (866 aa).

The 129-residue stretch at 33 to 161 (NDFGATVIDG…KYRYDRVFFA (129 aa)) folds into the PLAT domain. Residues 164 to 866 (AYLPSQMPAA…AKGIPNSISI (703 aa)) enclose the Lipoxygenase domain. A disordered region spans residues 206-250 (YNDLGSPDSGNPRPILGGSPDTPYPRRGRTGRKPTTTDPDSESRL). Fe cation-binding residues include His521, His526, His712, Asn716, and Ile866.

The protein belongs to the lipoxygenase family. Fe cation is required as a cofactor.

It carries out the reaction (9Z,12Z)-octadecadienoate + O2 = (9S)-hydroperoxy-(10E,12Z)-octadecadienoate. It functions in the pathway lipid metabolism; oxylipin biosynthesis. Its function is as follows. Plant lipoxygenase may be involved in a number of diverse aspects of plant physiology including growth and development, pest resistance, and senescence or responses to wounding. Catalyzes the hydroperoxidation of lipids containing a cis,cis-1,4-pentadiene structure. The polypeptide is Putative linoleate 9S-lipoxygenase 3 (Oryza sativa subsp. japonica (Rice)).